The chain runs to 122 residues: Large ribosomal subunit protein uL14 (122 aa).

It belongs to the universal ribosomal protein uL14 family. As to quaternary structure, part of the 50S ribosomal subunit. Forms a cluster with proteins L3 and L19. In the 70S ribosome, L14 and L19 interact and together make contacts with the 16S rRNA in bridges B5 and B8.

Functionally, binds to 23S rRNA. Forms part of two intersubunit bridges in the 70S ribosome. This Polynucleobacter necessarius subsp. necessarius (strain STIR1) protein is Large ribosomal subunit protein uL14.